The sequence spans 249 residues: 1-(5-phosphoribosyl)-5-[(5-phosphoribosylamino)methylideneamino] imidazole-4-carboxamide isomerase (249 aa).

The active-site Proton acceptor is Asp-8. The Proton donor role is filled by Asp-131.

This sequence belongs to the HisA/HisF family.

The protein resides in the cytoplasm. It catalyses the reaction 1-(5-phospho-beta-D-ribosyl)-5-[(5-phospho-beta-D-ribosylamino)methylideneamino]imidazole-4-carboxamide = 5-[(5-phospho-1-deoxy-D-ribulos-1-ylimino)methylamino]-1-(5-phospho-beta-D-ribosyl)imidazole-4-carboxamide. Its pathway is amino-acid biosynthesis; L-histidine biosynthesis; L-histidine from 5-phospho-alpha-D-ribose 1-diphosphate: step 4/9. The polypeptide is 1-(5-phosphoribosyl)-5-[(5-phosphoribosylamino)methylideneamino] imidazole-4-carboxamide isomerase (Aromatoleum aromaticum (strain DSM 19018 / LMG 30748 / EbN1) (Azoarcus sp. (strain EbN1))).